We begin with the raw amino-acid sequence, 402 residues long: Succinylornithine transaminase (402 aa).

The residue at position 252 (Lys-252) is an N6-(pyridoxal phosphate)lysine.

It belongs to the class-III pyridoxal-phosphate-dependent aminotransferase family. AstC subfamily. Pyridoxal 5'-phosphate is required as a cofactor.

It carries out the reaction N(2)-succinyl-L-ornithine + 2-oxoglutarate = N-succinyl-L-glutamate 5-semialdehyde + L-glutamate. The protein operates within amino-acid degradation; L-arginine degradation via AST pathway; L-glutamate and succinate from L-arginine: step 3/5. In terms of biological role, catalyzes the transamination of N(2)-succinylornithine and alpha-ketoglutarate into N(2)-succinylglutamate semialdehyde and glutamate. Can also act as an acetylornithine aminotransferase. The protein is Succinylornithine transaminase of Photorhabdus laumondii subsp. laumondii (strain DSM 15139 / CIP 105565 / TT01) (Photorhabdus luminescens subsp. laumondii).